The sequence spans 213 residues: MKTLLVLNSSGRVTRSLTRRLTSRFAEAWSAVHHDAVVVQRDLTLNPPPTINEPWIVAAFAAPDTPATVREAVLRASDELLDELTAADAVVIGAPVYNFGLPAQLKAYVDQIVRVGRSFALTGDAAVPYRALLAPKPVVVMTAASDGVMLPGGALAHLNLVEPHLTAALGFIGLTDVRFVRVADSVADQAAHPHSLAAAERAIEMILPRLAAA.

Residue serine 10 coordinates FMN.

The protein belongs to the azoreductase type 1 family. In terms of assembly, homodimer. The cofactor is FMN.

The catalysed reaction is 2 a quinone + NADH + H(+) = 2 a 1,4-benzosemiquinone + NAD(+). The enzyme catalyses N,N-dimethyl-1,4-phenylenediamine + anthranilate + 2 NAD(+) = 2-(4-dimethylaminophenyl)diazenylbenzoate + 2 NADH + 2 H(+). Quinone reductase that provides resistance to thiol-specific stress caused by electrophilic quinones. Functionally, also exhibits azoreductase activity. Catalyzes the reductive cleavage of the azo bond in aromatic azo compounds to the corresponding amines. This Opitutus terrae (strain DSM 11246 / JCM 15787 / PB90-1) protein is FMN-dependent NADH:quinone oxidoreductase.